A 207-amino-acid polypeptide reads, in one-letter code: Cilia- and flagella-associated protein 418 (207 aa).

The segment at 1–75 (MAEDLDELLD…LINEILEEPN (75 aa)) is required for interaction with FAM161A. A disordered region spans residues 26–52 (MVEQPKGCGGGTHSSDRNQAKAKETLR). Positions 39 to 52 (SSDRNQAKAKETLR) are enriched in basic and acidic residues.

As to quaternary structure, interacts (via N-terminus) with FAM161A (via central region); the interaction is direct. Widely expressed, with highest levels in heart and brain. Also expressed in the retina (at protein level).

It localises to the cytoplasm. The protein localises to the photoreceptor inner segment. May be involved in photoreceptor outer segment disk morphogenesis. This is Cilia- and flagella-associated protein 418 from Homo sapiens (Human).